Reading from the N-terminus, the 84-residue chain is Small ribosomal subunit protein uS17 (84 aa).

Belongs to the universal ribosomal protein uS17 family. Part of the 30S ribosomal subunit.

Its function is as follows. One of the primary rRNA binding proteins, it binds specifically to the 5'-end of 16S ribosomal RNA. The polypeptide is Small ribosomal subunit protein uS17 (Citrobacter koseri (strain ATCC BAA-895 / CDC 4225-83 / SGSC4696)).